The primary structure comprises 179 residues: MSYSPSLKEIIAILQKYTSKNYQSNCKTRPDGKLELSLNGVFEEIVKTPGKTRYVTHKQLDQKLKDFKQDLMVELHDTFATKTDLKESEARINQKLEALIQIVMVQGEQIKVHGEQINKLTQAVEKQGEKIEAQGQQIQKVNETLNFVVESLGSIHKRLDSMEGRLDSMENRLDKLESK.

It belongs to the UPF0134 family.

This is UPF0134 protein MPN_145 from Mycoplasma pneumoniae (strain ATCC 29342 / M129 / Subtype 1) (Mycoplasmoides pneumoniae).